A 1048-amino-acid chain; its full sequence is 3-hydroxy-3-methylglutaryl-coenzyme A reductase (1048 aa).

Over 1 to 32 (MDPVVRKPDPGGVQHRVTKALRAIVGHACRHP) the chain is Cytoplasmic. The helical transmembrane segment at 33-53 (IHTLLVTALTAATTHLHVLEG) threads the bilayer. Over 54 to 220 (TYQATHRGLA…FLHRVHHAET (167 aa)) the chain is Lumenal. A helical transmembrane segment spans residues 221–241 (VDLVIIGLSYLAMNMTVVSLF). An SSD domain is found at 222 to 403 (DLVIIGLSYL…FTFYATILCV (182 aa)). Over 242-250 (RVMRHLGSR) the chain is Cytoplasmic. A helical membrane pass occupies residues 251–271 (FWLAASVLLSGAFAFVLGLGI). Residues 272–276 (TTTCD) are Lumenal-facing. Residues 277-297 (VPVDMLLLFEGIPYLVLTVGF) form a helical membrane-spanning segment. At 298 to 348 (EKPIQLTRAVLCVSEELWGGGQRQVPNGASSDDSRQNQLIPNIIQLAVDRE) the chain is on the cytoplasmic side. Residues 349 to 369 (GWYIVRSYLLEIGALALGAVL) form a helical membrane-spanning segment. At 370 to 377 (RPKDSLGH) the chain is on the lumenal side. The helical transmembrane segment at 378–398 (FCFLAAWTLLIDAVLLFTFYA) threads the bilayer. Residues 399-439 (TILCVKLEITRIRSPGGLGQVNAKHPSGIFGHKVKSTNITW) are Cytoplasmic-facing. The chain crosses the membrane as a helical span at residues 440–460 (WKLLTVGGFVLCHFLQLSPFF). Residues 461–542 (YRVMGEYMAN…LDGLESPLGR (82 aa)) are Lumenal-facing. N-linked (GlcNAc...) asparagine glycosylation is found at Asn-470 and Asn-520. Residues 543–563 (LCLMGALVVSLVLNNHLIHAA) form a helical membrane-spanning segment. Residues 564-1048 (RWHAWPQARE…NRSAGATVKK (485 aa)) are Cytoplasmic-facing. Glu-729 serves as the catalytic Charge relay system. 735-741 (SASRGCK) contacts CoA. NADP(+) contacts are provided by residues 796–798 (SRF) and 823–831 (DAMGMNMIS). Lys-863 functions as the Charge relay system in the catalytic mechanism. 892–894 (VLK) lines the CoA pocket. Asp-939 (charge relay system) is an active-site residue. 1034–1035 (AH) lines the CoA pocket. The active-site Proton donor is His-1035. 1039-1040 (NR) is a binding site for NADP(+).

It belongs to the HMG-CoA reductase family.

The protein localises to the endoplasmic reticulum membrane. It catalyses the reaction (R)-mevalonate + 2 NADP(+) + CoA = (3S)-3-hydroxy-3-methylglutaryl-CoA + 2 NADPH + 2 H(+). Its pathway is metabolic intermediate biosynthesis; (R)-mevalonate biosynthesis; (R)-mevalonate from acetyl-CoA: step 3/3. HMG-CoA reductase; part of the first module of ergosterol biosynthesis pathway that includes the early steps of the pathway, conserved across all eukaryotes, and which results in the formation of mevalonate from acetyl-coenzyme A (acetyl-CoA). In this module, the cytosolic acetyl-CoA acetyltransferase catalyzes the formation of acetoacetyl-CoA. The hydroxymethylglutaryl-CoA synthase then condenses acetyl-CoA with acetoacetyl-CoA to form HMG-CoA. The rate-limiting step of the early module is the reduction to mevalonate by the 3-hydroxy-3-methylglutaryl-coenzyme A (HMG-CoA) reductase. The protein is 3-hydroxy-3-methylglutaryl-coenzyme A reductase of Aspergillus terreus.